A 743-amino-acid polypeptide reads, in one-letter code: Inhibitor of nuclear factor kappa-B kinase subunit alpha (743 aa).

The Protein kinase domain maps to 15–300 (WDMKDRLGTG…IDCGRPRCFM (286 aa)). Residues 21–29 (LGTGGFGNV) and lysine 44 contribute to the ATP site. Aspartate 144 functions as the Proton acceptor in the catalytic mechanism. A leucine-zipper region spans residues 453–474 (LLRFNTNLTKMKNTMVSASQQL). The tract at residues 736-741 (MDFSWL) is NEMO-binding.

It belongs to the protein kinase superfamily. Ser/Thr protein kinase family. I-kappa-B kinase subfamily.

The protein resides in the cytoplasm. It localises to the nucleus. It catalyses the reaction L-seryl-[I-kappa-B protein] + ATP = O-phospho-L-seryl-[I-kappa-B protein] + ADP + H(+). With respect to regulation, activated when phosphorylated and inactivated when dephosphorylated. Functionally, phosphorylates inhibitors of NF-kappa-B thus leading to the dissociation of the inhibitor/NF-kappa-B complex and ultimately the degradation of the inhibitor. Phosphorylates 'Ser-10' of histone H3 at NF-kappa-B-regulated promoters during inflammatory responses triggered by cytokines. This is Inhibitor of nuclear factor kappa-B kinase subunit alpha (chuk) from Xenopus laevis (African clawed frog).